The primary structure comprises 416 residues: S-adenosylmethionine synthase (416 aa).

Residue His14 coordinates ATP. Asp16 provides a ligand contact to Mg(2+). Glu42 contributes to the K(+) binding site. Glu55 and Gln98 together coordinate L-methionine. The interval 98–108 (QSADINQGVDR) is flexible loop. ATP contacts are provided by residues 164 to 166 (DAK), 240 to 241 (KF), Asp249, 255 to 256 (RK), Ala272, and Lys276. L-methionine is bound at residue Asp249. Position 280 (Lys280) interacts with L-methionine.

The protein belongs to the AdoMet synthase family. As to quaternary structure, homotetramer; dimer of dimers. Requires Mg(2+) as cofactor. K(+) serves as cofactor.

It localises to the cytoplasm. The catalysed reaction is L-methionine + ATP + H2O = S-adenosyl-L-methionine + phosphate + diphosphate. It functions in the pathway amino-acid biosynthesis; S-adenosyl-L-methionine biosynthesis; S-adenosyl-L-methionine from L-methionine: step 1/1. In terms of biological role, catalyzes the formation of S-adenosylmethionine (AdoMet) from methionine and ATP. The overall synthetic reaction is composed of two sequential steps, AdoMet formation and the subsequent tripolyphosphate hydrolysis which occurs prior to release of AdoMet from the enzyme. In Flavobacterium johnsoniae (strain ATCC 17061 / DSM 2064 / JCM 8514 / BCRC 14874 / CCUG 350202 / NBRC 14942 / NCIMB 11054 / UW101) (Cytophaga johnsonae), this protein is S-adenosylmethionine synthase.